A 306-amino-acid polypeptide reads, in one-letter code: Follistatin-related protein 1 (306 aa).

A signal peptide spans 1-18 (MWKRWLALALVTIALVHG). The Follistatin-like domain maps to 28-51 (ICANVFCGAGRECAVTEKGEPTCL). Cystine bridges form between cysteine 29–cysteine 40, cysteine 34–cysteine 50, cysteine 52–cysteine 82, cysteine 56–cysteine 75, and cysteine 64–cysteine 96. The region spanning 46-98 (GEPTCLCIEQCKPHKRPVCGSNGKTYLNHCELHRDACLTGSKIQVDYDGHCKE) is the Kazal-like domain. An N-linked (GlcNAc...) asparagine glycan is attached at asparagine 142. The region spanning 142–176 (NYSEILDKYFKSFDNGDSHLDSSEFLKFVEQNETA) is the EF-hand 1 domain. Position 163 is a phosphoserine (serine 163). N-linked (GlcNAc...) asparagine glycosylation is found at asparagine 173 and asparagine 178. Positions 191–226 (LRGLCVDALIELSDENADWKLSFQEFLKCLNPSFNP) constitute an EF-hand 2 domain. The VWFC domain maps to 231–285 (CALEDETYADGAETEVDCNRCVCSCGHWVCTAMTCDGKNQKGVQTHTEEEMTRYA).

As to quaternary structure, homodimer. Interacts with SCN10A. Interacts with DIP2A; DIP2A may act as a cell surface receptor for FSTL1. Interacts with BMP4. Interacts with CD14; this interaction promotes TL4-mediated signaling cascade.

It is found in the secreted. Functionally, secreted glycoprotein that is involved in various physiological processes, such as angiogenesis, regulation of the immune response, cell proliferation and differentiation. Plays a role in the development of the central nervous system, skeletal system, lungs, and ureter. Promotes endothelial cell survival, migration and differentiation into network structures in an AKT-dependent manner. Also promotes survival of cardiac myocytes. Initiates various signaling cascades by activating different receptors on the cell surface such as DIP2A, TLR4 or BMP receptors. The polypeptide is Follistatin-related protein 1 (Fstl1) (Rattus norvegicus (Rat)).